The sequence spans 299 residues: MPGRLLRGLWQRWRRYKYRFVPWIALNLSHNPRTLRYVPEESKDKVISDEDVLGTLLKVFQALFLNDFNKQSEILSMLPESVKSKYQDLLAVEHQGVKLLENRHQQQSTFKPEEILYKTLGFSVAQATSSLISAGKGVFVTKGLVPKGAVVSMYPGTVYQKYEPIFFQSIGNPFIFRCLDGVLIDGNDKGISKVVYRSCNGRDRLGPLKMSDSTWLTSEIHNPLAVGQYVNNCSNDRAANVCYQEFDVPAVFPIELKQYLPNIAYSYDKQSPLRCVVLVALRDINQGEELFSNYYTIVS.

Positions 122–295 (FSVAQATSSL…QGEELFSNYY (174 aa)) constitute an SET domain. Y294 contacts S-adenosyl-L-methionine.

It belongs to the class V-like SAM-binding methyltransferase superfamily.

The chain is SET domain-containing protein 9 (SETD9) from Homo sapiens (Human).